Here is a 212-residue protein sequence, read N- to C-terminus: MILFRRHRTFLLAFTLLCTLLGLGCPLTCEVCKGSGHTCSGKMKTCEDGKDACVVLVSESSTKGRKSVNTFKACMKYKDCYSGFVSTTMTPSDYMVSNAHCCQSDGCNSGSVPPPLNNRTENGLMCPSCIAPFQETCPGTQAARCVGRETHCIYFAGNVQAGIIHTKFATRGCATESACHTKAGAEVPSAFYLYFLRRADCLPAPYPPGRGE.

Residues 1-24 (MILFRRHRTFLLAFTLLCTLLGLG) form the signal peptide. Positions 27 to 117 (LTCEVCKGSG…NSGSVPPPLN (91 aa)) constitute a UPAR/Ly6 domain. Intrachain disulfides connect cysteine 29-cysteine 53, cysteine 32-cysteine 39, cysteine 46-cysteine 74, cysteine 80-cysteine 101, cysteine 102-cysteine 107, cysteine 126-cysteine 152, and cysteine 145-cysteine 173.

Belongs to the CNF-like-inhibitor family.

The protein localises to the secreted. The polypeptide is phospholipase A2 inhibitor and Ly6/PLAUR domain-containing protein (Pinlyp) (Mus musculus (Mouse)).